The sequence spans 596 residues: Beta-glucuronidase (596 aa).

D-glucuronate-binding residues include Asp168 and Asn412. Glu413 functions as the Proton donor in the catalytic mechanism. Residues Asn464, Tyr470, Glu502, Trp547, and Lys566 each coordinate D-glucuronate. Glu502 serves as the catalytic Nucleophile. The N-K motif signature appears at 564 to 566 (NKK).

Belongs to the glycosyl hydrolase 2 family.

It localises to the cytoplasm. It catalyses the reaction a beta-D-glucuronoside + H2O = D-glucuronate + an alcohol. Displays beta-glucuronidase activity with the artificial substrate p-nitrophenyl-beta-D-glucuronide (PNPG). Is probably involved in the metabolism of oligosaccharides containing the 3-O-beta-D-glucopyranosyl-beta-D-glucuronide structure released from bacterial and plant acidic carbohydrates. The sequence is that of Beta-glucuronidase from Paenibacillus borealis.